Reading from the N-terminus, the 70-residue chain is Large ribosomal subunit protein bL32 (70 aa).

Residues 1–19 (MAVPKKKTSPSRRGMRRSH) show a composition bias toward basic residues. Residues 1–21 (MAVPKKKTSPSRRGMRRSHQA) form a disordered region.

It belongs to the bacterial ribosomal protein bL32 family.

This Granulibacter bethesdensis (strain ATCC BAA-1260 / CGDNIH1) protein is Large ribosomal subunit protein bL32.